The following is a 319-amino-acid chain: MATTKPYRVLLYYMYTTIENPEEFAAEHLEFCNSLELKGRILVAKEGINGTCSGTVEQTEKYMEAMNNDPRFDGIVFKIDEADGHAFKKMHVRPRPELVTLRLEDDINPHEITGKYLEPKDFYEAMKQEDTVIIDARNDYEFDLGHFKGAIKPDIESFRELPDWIRENKEVLEGKKILTYCTGGIRCEKFSGWLVREGYEDVSQLHGGIVTYGKDPEVQGELWDGQCYVFDERIAVPVNQKEHVIVGKDHFTGEPCERYVNCSNPECNKKILCSEENEAKYLRACSHECRVSPRNRYVIQHELTEEQVAAALEQIEAGK.

The region spanning 127–221 (KQEDTVIIDA…YGKDPEVQGE (95 aa)) is the Rhodanese domain. Cys-181 serves as the catalytic Cysteine persulfide intermediate.

The protein belongs to the TrhO family.

It carries out the reaction uridine(34) in tRNA + AH2 + O2 = 5-hydroxyuridine(34) in tRNA + A + H2O. Its function is as follows. Catalyzes oxygen-dependent 5-hydroxyuridine (ho5U) modification at position 34 in tRNAs. In Bacillus cereus (strain B4264), this protein is tRNA uridine(34) hydroxylase.